The following is a 69-amino-acid chain: FXYD domain-containing ion transport regulator 11 (69 aa).

The signal sequence occupies residues 1 to 22 (MSQLTELVLLTVFLALFSRAEA). Residues 23–33 (NPFVYNYEALR) are Extracellular-facing. The chain crosses the membrane as a helical span at residues 34 to 54 (IGGLVFTCVLVAGAVTALCWG). At 55–69 (QCKPKRKHDDDASKI) the chain is on the cytoplasmic side.

It belongs to the FXYD family. As to expression, detected in adult gill and in larval skin at 2 days post-fertilization (at protein level). In adult gill, strong expression is found in the basal regions of the secondary lamellae.

It localises to the cell membrane. Its function is as follows. May modulate the activity of a sodium/potassium-transporting ATPase. The protein is FXYD domain-containing ion transport regulator 11 of Danio rerio (Zebrafish).